Consider the following 457-residue polypeptide: Adenylosuccinate synthetase (457 aa).

GTP contacts are provided by residues 45–51 and 73–75; these read GDEGKGK and GHT. The active-site Proton acceptor is aspartate 46. Positions 46 and 73 each coordinate Mg(2+). IMP contacts are provided by residues 46 to 49, 71 to 74, threonine 163, arginine 177, asparagine 255, threonine 270, and arginine 334; these read DEGK and NAGH. The active-site Proton donor is the histidine 74. 330–336 lines the substrate pocket; the sequence is VTTKRVR. GTP is bound by residues arginine 336, 362–364, and 444–446; these read KLD and GVG.

Belongs to the adenylosuccinate synthetase family. As to quaternary structure, homodimer. Requires Mg(2+) as cofactor.

It is found in the cytoplasm. The catalysed reaction is IMP + L-aspartate + GTP = N(6)-(1,2-dicarboxyethyl)-AMP + GDP + phosphate + 2 H(+). The protein operates within purine metabolism; AMP biosynthesis via de novo pathway; AMP from IMP: step 1/2. Its function is as follows. Plays an important role in the de novo pathway and in the salvage pathway of purine nucleotide biosynthesis. Catalyzes the first committed step in the biosynthesis of AMP from IMP. This chain is Adenylosuccinate synthetase, found in Aedes aegypti (Yellowfever mosquito).